The chain runs to 5386 residues: Nonribosomal peptide synthetase 2 (5386 aa).

Residues 45 to 435 (HDANAIDFLE…QGLLECLGRV (391 aa)) form an adenylation 1 region. The Carrier 1 domain occupies 544 to 617 (SPKDPIGHSV…DLIEVCRESK (74 aa)). Serine 578 is modified (O-(pantetheine 4'-phosphoryl)serine). The interval 652–1059 (LPCTPLQEAM…VDADRHVSAI (408 aa)) is condensation 1. The tract at residues 1089-1482 (EKWAATDPHR…GRTDDQVKIR (394 aa)) is adenylation 2. The region spanning 1611 to 1688 (ELLSQWERDV…SLASLKKLQS (78 aa)) is the Carrier 2 domain. An O-(pantetheine 4'-phosphoryl)serine modification is found at serine 1648. The tract at residues 1731-2141 (ILPCTPLQEA…ALSADTDMFP (411 aa)) is condensation 2. Residues 2166–2551 (FERTALLHPD…GRLDDQVKIR (386 aa)) are adenylation 3. A Carrier 3 domain is found at 2652–2725 (SKTESEVRNI…DLAEHLDQIS (74 aa)). Serine 2686 carries the post-translational modification O-(pantetheine 4'-phosphoryl)serine. The interval 2763 to 3174 (RPCTPLQNGM…HSQIPLAKTD (412 aa)) is condensation 3. Positions 3202-3603 (EKTAQEHPQR…GRADDQVKLR (402 aa)) are adenylation 4. Residues 3728-3805 (EQWSKQEEKL…RLAKSLAANS (78 aa)) enclose the Carrier 4 domain. Position 3765 is an O-(pantetheine 4'-phosphoryl)serine (serine 3765). Positions 3846–4250 (LAPCTPLQQG…LDQAINDPSA (405 aa)) are condensation 4. Positions 4281 to 4357 (FEWSDNAIAI…KMAQNMSMKN (77 aa)) constitute a Carrier 5 domain. At serine 4318 the chain carries O-(pantetheine 4'-phosphoryl)serine. A condensation 5 region spans residues 4391-4802 (EEILPLTPLQ…ERAEAPVIDM (412 aa)). Positions 4821–4842 (HTGSGHVESGEDDGQDTPSTET) are disordered. The 74-residue stretch at 4840–4913 (TETTNRIRKI…KMAKLADARA (74 aa)) folds into the Carrier 6 domain. Position 4874 is an O-(pantetheine 4'-phosphoryl)serine (serine 4874). The condensation 6 stretch occupies residues 4952–5257 (QMLPVTAGQL…VQAHLRHLND (306 aa)).

It belongs to the NRP synthetase family.

Its pathway is siderophore biosynthesis. Functionally, nonribosomal peptide synthetase; part of the gene cluster that mediates the biosynthesis of hydroxamate-containing siderophores that play a critical role in virulence. Cochliobolus heterostrophus produces extracellular coprogen-type siderophores including coprogen, neocoprogen I and neocoprogen II, as well as the intracellular siderophore ferricrocin. The role of extracellular siderophores is to supply iron to the fungus during plant infection, and the intracellular ferricrocin is required for intracellular iron distribution and storage with a crucial role in ascus and ascospore development. SIDA2 catalyzes the conversion of L-ornithine to N(5)-hydroxyornithine, the first step in the biosynthesis of all hydroxamate-containing siderophores. The assembly of extracellular coprogen-type siderophores is then performed by the nonribosomal peptide synthetase (NRPS) NPS6 whereas the intracellular siderophore ferricrocin is assembled by NPS2. This is Nonribosomal peptide synthetase 2 from Cochliobolus heterostrophus (strain C4 / ATCC 48331 / race T) (Southern corn leaf blight fungus).